Here is a 98-residue protein sequence, read N- to C-terminus: Co-chaperonin GroES (98 aa).

The disordered stretch occupies residues 32–56; that stretch reads NAKEKPQQGEVLAVGPGRRDDEGKR.

This sequence belongs to the GroES chaperonin family. Heptamer of 7 subunits arranged in a ring. Interacts with the chaperonin GroEL.

Its subcellular location is the cytoplasm. Functionally, together with the chaperonin GroEL, plays an essential role in assisting protein folding. The GroEL-GroES system forms a nano-cage that allows encapsulation of the non-native substrate proteins and provides a physical environment optimized to promote and accelerate protein folding. GroES binds to the apical surface of the GroEL ring, thereby capping the opening of the GroEL channel. In Bifidobacterium animalis subsp. lactis (strain AD011), this protein is Co-chaperonin GroES.